A 125-amino-acid chain; its full sequence is Snaclec botrocetin subunit beta (125 aa).

Cystine bridges form between Cys-2–Cys-13, Cys-30–Cys-121, and Cys-98–Cys-113. The C-type lectin domain maps to 9–122 (YEGHCYRFFK…CTRFKNFVCE (114 aa)).

The protein belongs to the snaclec family. In terms of assembly, heterodimer of subunits alpha and beta; disulfide-linked. Botrocetin and vWF form a soluble complex. In terms of tissue distribution, expressed by the venom gland.

It is found in the secreted. In terms of biological role, snaclec that binds to von Willebrand factor (VWF) and induces its interaction with GPIbalpha (GP1BA) (via the vWF A1 domain), resulting in platelet aggregation. The chain is Snaclec botrocetin subunit beta from Bothrops jararaca (Jararaca).